A 280-amino-acid polypeptide reads, in one-letter code: Putative transcription factor kapC (280 aa).

A disordered region spans residues 1 to 102 (MQPALAPHPS…GKRPLSTSKR (102 aa)). Positions 39 to 49 (PQPPAPQPPHM) are enriched in pro residues. The segment covering 79-89 (TQPDVTGQETP) has biased composition (polar residues). In terms of domain architecture, bZIP spans 96–159 (PLSTSKRAAQ…EYIINLQSRL (64 aa)). A basic motif region spans residues 97 to 120 (LSTSKRAAQNRAAQRAFRQRKEAH). The tract at residues 124 to 155 (LEGKVKAYESMGEAIKALQAENYQLREYIINL) is leucine-zipper. A disordered region spans residues 169–280 (LPGNIDLSQP…EQTHGLPLIS (112 aa)). A compositionally biased stretch (pro residues) spans 197–206 (APPPTAPQQP).

The protein belongs to the bZIP family.

The protein localises to the nucleus. Functionally, putative transcription factor. This is Putative transcription factor kapC (kapC) from Aspergillus fumigatus (strain ATCC MYA-4609 / CBS 101355 / FGSC A1100 / Af293) (Neosartorya fumigata).